The sequence spans 61 residues: Large ribosomal subunit protein uL30 (61 aa).

Belongs to the universal ribosomal protein uL30 family. Part of the 50S ribosomal subunit.

This Chromobacterium violaceum (strain ATCC 12472 / DSM 30191 / JCM 1249 / CCUG 213 / NBRC 12614 / NCIMB 9131 / NCTC 9757 / MK) protein is Large ribosomal subunit protein uL30.